We begin with the raw amino-acid sequence, 476 residues long: Cytosolic iron-sulfur assembly component 3 (476 aa).

Ala2 carries the post-translational modification N-acetylalanine. [4Fe-4S] cluster contacts are provided by Cys24, Cys71, Cys74, Cys77, Cys190, Cys246, Cys395, and Cys399.

It belongs to the NARF family. In terms of assembly, external component of the CIA complex. In the CIA complex, interacts directly with CIAO1 and MMS19.

Component of the cytosolic iron-sulfur protein assembly (CIA) complex, a multiprotein complex that mediates the incorporation of iron-sulfur cluster into extramitochondrial Fe/S proteins. Seems to negatively regulate the level of HIF1A expression, although this effect could be indirect. This chain is Cytosolic iron-sulfur assembly component 3, found in Pongo abelii (Sumatran orangutan).